Reading from the N-terminus, the 248-residue chain is Probable transcriptional regulatory protein Bind_0345 (248 aa).

It belongs to the TACO1 family.

The protein resides in the cytoplasm. This is Probable transcriptional regulatory protein Bind_0345 from Beijerinckia indica subsp. indica (strain ATCC 9039 / DSM 1715 / NCIMB 8712).